A 429-amino-acid polypeptide reads, in one-letter code: Bifunctional protein GlmU (429 aa).

Residues Met-1 to Lys-223 form a pyrophosphorylase region. UDP-N-acetyl-alpha-D-glucosamine-binding positions include Leu-8 to Gly-11, Lys-22, Gln-74, and Gly-81 to Thr-82. Residue Asp-102 participates in Mg(2+) binding. UDP-N-acetyl-alpha-D-glucosamine contacts are provided by Gly-135, Glu-149, Asn-164, and Asn-221. Asn-221 is a Mg(2+) binding site. The interval Phe-224–Gln-244 is linker. Residues Gly-245 to Lys-429 are N-acetyltransferase. 2 residues coordinate UDP-N-acetyl-alpha-D-glucosamine: Arg-308 and Lys-325. His-336 serves as the catalytic Proton acceptor. Tyr-339 and Asn-350 together coordinate UDP-N-acetyl-alpha-D-glucosamine. Acetyl-CoA is bound by residues Asn-359–Tyr-360, Ser-378, Ala-396, and Arg-413.

The protein in the N-terminal section; belongs to the N-acetylglucosamine-1-phosphate uridyltransferase family. This sequence in the C-terminal section; belongs to the transferase hexapeptide repeat family. In terms of assembly, homotrimer. Mg(2+) is required as a cofactor.

The protein localises to the cytoplasm. It carries out the reaction alpha-D-glucosamine 1-phosphate + acetyl-CoA = N-acetyl-alpha-D-glucosamine 1-phosphate + CoA + H(+). The catalysed reaction is N-acetyl-alpha-D-glucosamine 1-phosphate + UTP + H(+) = UDP-N-acetyl-alpha-D-glucosamine + diphosphate. The protein operates within nucleotide-sugar biosynthesis; UDP-N-acetyl-alpha-D-glucosamine biosynthesis; N-acetyl-alpha-D-glucosamine 1-phosphate from alpha-D-glucosamine 6-phosphate (route II): step 2/2. It functions in the pathway nucleotide-sugar biosynthesis; UDP-N-acetyl-alpha-D-glucosamine biosynthesis; UDP-N-acetyl-alpha-D-glucosamine from N-acetyl-alpha-D-glucosamine 1-phosphate: step 1/1. It participates in bacterial outer membrane biogenesis; LPS lipid A biosynthesis. Functionally, catalyzes the last two sequential reactions in the de novo biosynthetic pathway for UDP-N-acetylglucosamine (UDP-GlcNAc). The C-terminal domain catalyzes the transfer of acetyl group from acetyl coenzyme A to glucosamine-1-phosphate (GlcN-1-P) to produce N-acetylglucosamine-1-phosphate (GlcNAc-1-P), which is converted into UDP-GlcNAc by the transfer of uridine 5-monophosphate (from uridine 5-triphosphate), a reaction catalyzed by the N-terminal domain. The protein is Bifunctional protein GlmU of Campylobacter jejuni subsp. doylei (strain ATCC BAA-1458 / RM4099 / 269.97).